A 118-amino-acid chain; its full sequence is uncharacterized protein (118 aa).

This is an uncharacterized protein from Escherichia coli (strain K12).